We begin with the raw amino-acid sequence, 66 residues long: Ocellatin-PT2 (66 aa).

The first 22 residues, 1–22 (MAFLKKSLFLVLFLGLVSLSIC), serve as a signal peptide directing secretion. A propeptide spanning residues 23–39 (DEEKRQDEDDDDDDDEE) is cleaved from the precursor. V66 is subject to Valine amide.

Expressed by the skin glands.

The protein localises to the secreted. In terms of biological role, has no antibacterial activity against Gram-negative bacteria E.coli ATCC 25922, S.pneumoniae ATCC 700603 and S.choleraesuis ATCC 14028 or against Gram-positive bacterium S.aureus ATCC 29313. Shows no hemolytic activity and no cytotoxicity. In Leptodactylus pustulatus (Ceara white-lipped frog), this protein is Ocellatin-PT2.